Reading from the N-terminus, the 94-residue chain is Immune protein Tsi6 (94 aa).

Functionally, immunity protein that plays a role in preventing early activation of toxin Tse6. The sequence is that of Immune protein Tsi6 from Pseudomonas aeruginosa (strain ATCC 15692 / DSM 22644 / CIP 104116 / JCM 14847 / LMG 12228 / 1C / PRS 101 / PAO1).